The following is a 104-amino-acid chain: Large ribosomal subunit protein uL24 (104 aa).

It belongs to the universal ribosomal protein uL24 family. As to quaternary structure, part of the 50S ribosomal subunit.

One of two assembly initiator proteins, it binds directly to the 5'-end of the 23S rRNA, where it nucleates assembly of the 50S subunit. Functionally, one of the proteins that surrounds the polypeptide exit tunnel on the outside of the subunit. The sequence is that of Large ribosomal subunit protein uL24 from Aliivibrio fischeri (strain ATCC 700601 / ES114) (Vibrio fischeri).